A 684-amino-acid chain; its full sequence is Ski-like protein (684 aa).

Residues Lys-50 and Lys-70 each participate in a glycyl lysine isopeptide (Lys-Gly) (interchain with G-Cter in SUMO2) cross-link. The tract at residues 420–454 is disordered; it reads SQSKELTKTEASKSISRQSEKAHSSGKLQKTVSYP. Ser-452 is subject to Phosphoserine. Residues Lys-489 and Lys-527 each participate in a glycyl lysine isopeptide (Lys-Gly) (interchain with G-Cter in SUMO2) cross-link. The stretch at 536–684 forms a coiled coil; the sequence is RTYLKQQEKL…ILKSSKTAKE (149 aa).

It belongs to the SKI family. As to quaternary structure, interacts with CPNE4 (via VWFA domain). Interacts with SMAD2, SMAD3 and RNF111. Isoform 1 interacts with WWP1. Ubiquitinated by RNF111 and ARK2C, promoting proteasomal degradation, leading to enhance the BMP-Smad signaling. In terms of tissue distribution, isoform SNON and isoform SNOA are widely expressed. Highest expression is found in skeletal muscle, followed by placenta and lung. Lowest expression in heart, brain and pancreas. Isoform SNOI expression is restricted to skeletal muscle.

May have regulatory role in cell division or differentiation in response to extracellular signals. This Homo sapiens (Human) protein is Ski-like protein (SKIL).